The primary structure comprises 346 residues: Phosphoribosylformylglycinamidine cyclo-ligase (346 aa).

This sequence belongs to the AIR synthase family.

Its subcellular location is the cytoplasm. The enzyme catalyses 2-formamido-N(1)-(5-O-phospho-beta-D-ribosyl)acetamidine + ATP = 5-amino-1-(5-phospho-beta-D-ribosyl)imidazole + ADP + phosphate + H(+). Its pathway is purine metabolism; IMP biosynthesis via de novo pathway; 5-amino-1-(5-phospho-D-ribosyl)imidazole from N(2)-formyl-N(1)-(5-phospho-D-ribosyl)glycinamide: step 2/2. The protein is Phosphoribosylformylglycinamidine cyclo-ligase of Bacillus velezensis (strain DSM 23117 / BGSC 10A6 / LMG 26770 / FZB42) (Bacillus amyloliquefaciens subsp. plantarum).